The sequence spans 251 residues: 2,3-bisphosphoglycerate-dependent phosphoglycerate mutase (251 aa).

Substrate is bound by residues 8–15, 21–22, Arg60, 87–90, Lys98, 114–115, and 183–184; these read RHGESLWN, TG, ERHY, RR, and GN. His9 acts as the Tele-phosphohistidine intermediate in catalysis. The active-site Proton donor/acceptor is the Glu87.

It belongs to the phosphoglycerate mutase family. BPG-dependent PGAM subfamily.

It carries out the reaction (2R)-2-phosphoglycerate = (2R)-3-phosphoglycerate. The protein operates within carbohydrate degradation; glycolysis; pyruvate from D-glyceraldehyde 3-phosphate: step 3/5. Catalyzes the interconversion of 2-phosphoglycerate and 3-phosphoglycerate. This chain is 2,3-bisphosphoglycerate-dependent phosphoglycerate mutase, found in Thermoanaerobacter pseudethanolicus (strain ATCC 33223 / 39E) (Clostridium thermohydrosulfuricum).